Consider the following 747-residue polypeptide: Sushi domain-containing protein 1 (747 aa).

The signal sequence occupies residues 1–29 (MGRGPWDAGPSRRLLPLLLLLGLARGAAG). Over 30–721 (APGPDGLDVC…WAQVKDSSLM (692 aa)) the chain is Extracellular. The EGF-like 1 domain occupies 35-72 (GLDVCATCHEHATCQQREGKKICICNYGFVGNGRTQCV). Intrachain disulfides connect C39–C48, C42–C57, C59–C71, C77–C91, and C85–C100. One can recognise an EGF-like 2; calcium-binding domain in the interval 73–112 (DKNECQFGATLVCGNHTSCHNTPGGFYCICLEGYRATNNN). N-linked (GlcNAc...) asparagine glycans are attached at residues N87 and N112. In terms of domain architecture, EGF-like 3; calcium-binding spans 125–162 (DIDECEVSGLCRHGGRCVNTHGSFECYCMDGYLPRNGP). 6 disulfide bridges follow: C129-C141, C135-C150, C179-C221, C206-C234, C239-C281, and C266-C294. 2 Sushi domains span residues 177 to 236 (IDCG…HCQE) and 237 to 296 (INCG…TCTE). Residue N193 is glycosylated (N-linked (GlcNAc...) asparagine). Residue N253 is glycosylated (N-linked (GlcNAc...) asparagine). 3 N-linked (GlcNAc...) asparagine glycosylation sites follow: N348, N367, and N563. The helical transmembrane segment at 722–742 (LLQMAGVGLGSLAVVIILTFL) threads the bilayer. Residues 743-747 (SFSAV) lie on the Cytoplasmic side of the membrane.

It is found in the membrane. The protein is Sushi domain-containing protein 1 (SUSD1) of Homo sapiens (Human).